The chain runs to 579 residues: MQTATALEDSANAPSPAASSQGQFDREIVPIDTADAGNSTKRSPLKVALIMVALCCAVFLHALDNTIITTALPTITAAFDLDAAYTWIGSTYLLAVAASTMVWAKISDVFGRKPIILSANLCFFTGSLIAALSANFAMLIAARAIQGIGGAGVNVLANICVGDLFSQRKRGLYYGVIGGVWAVALSLGPVVGGSLTESISWRWCFYINLPLCAVVFVIIILLLDVKTPKTPFGKGIAAIDWVGAALSIGSTLMILLALSLGGQTEPWNSATVICLVVFGFIGWILCFSWEASLAKYPLLPVSIFKQIPTLAVLAACFIQSYAFVASAYYLPLYFQAVLGATPILSGVYLLPTAVSISISSTATGVYMRKTGQYLTPIYIGFVLQTLGYGLFIDLGPTANWAKIIVFQIIGGLGVGFNFQAPMVALQAFISPRELAMATSAYNFMRNVSGAISVVIGQTVFQNEMSKHQESLATILGPQLAAKLAGTGASASTDLIRSLPSPQRDVVHGVFANSMKSMWIMYTAFSAAALVVCPFLGKMVLREDHTETVTGLAAENAAREERLRQEKEKKDAKIRKCQVN.

The interval 1 to 23 is disordered; sequence MQTATALEDSANAPSPAASSQGQ. A compositionally biased stretch (low complexity) spans 10 to 20; that stretch reads SANAPSPAASS. N-linked (GlcNAc...) asparagine glycosylation is present at N38. The next 14 helical transmembrane spans lie at 48–68, 83–103, 121–141, 145–165, 171–191, 203–223, 236–256, 269–289, 298–318, 336–356, 374–394, 403–423, 438–460, and 516–536; these read ALIMVALCCAVFLHALDNTII, AAYTWIGSTYLLAVAASTMVW, LCFFTGSLIAALSANFAMLIA, IQGIGGAGVNVLANICVGDLF, GLYYGVIGGVWAVALSLGPVV, WCFYINLPLCAVVFVIIILLL, IAAIDWVGAALSIGSTLMILL, SATVICLVVFGFIGWILCFSW, LLPVSIFKQIPTLAVLAACFI, AVLGATPILSGVYLLPTAVSI, LTPIYIGFVLQTLGYGLFIDL, IIVFQIIGGLGVGFNFQAPMV, TSAYNFMRNVSGAISVVIGQTVF, and SMWIMYTAFSAAALVVCPFLG.

This sequence belongs to the major facilitator superfamily. TCR/Tet family.

It is found in the membrane. Its function is as follows. MFS-type transporter; part of the gene cluster that mediates the biosynthesis of pyrrolopyrazines, secondary metabolites showing insecticidal activity. Probably involved in the secretion of peramine and other pyrrolopyrazines. The sequence is that of MFS-type transporter ppz2 from Metarhizium majus (strain ARSEF 297).